The sequence spans 466 residues: tRNA dimethylallyltransferase 2 (466 aa).

27-34 (GPTGSGKS) provides a ligand contact to ATP. 29–34 (TGSGKS) serves as a coordination point for substrate. The interaction with substrate tRNA stretch occupies residues 52-55 (DAMQ). The segment at 433 to 466 (WEHHKQGRTHRKRTTRHKNSQTYKNREVQEAEVN) is disordered. Residues 437 to 451 (KQGRTHRKRTTRHKN) are compositionally biased toward basic residues. The span at 456-466 (KNREVQEAEVN) shows a compositional bias: basic and acidic residues.

It belongs to the IPP transferase family. The cofactor is Mg(2+). In terms of tissue distribution, expressed ubiquitously, with highest expression in proliferating tissues.

The protein localises to the cytoplasm. It catalyses the reaction adenosine(37) in tRNA + dimethylallyl diphosphate = N(6)-dimethylallyladenosine(37) in tRNA + diphosphate. In terms of biological role, catalyzes the transfer of a dimethylallyl group onto the adenine at position 37 in tRNAs that read codons beginning with uridine, leading to the formation of N6-(dimethylallyl)adenosine (i(6)A). Involved in the cis-type cytokinin biosynthesis. The sequence is that of tRNA dimethylallyltransferase 2 (IPT2) from Arabidopsis thaliana (Mouse-ear cress).